We begin with the raw amino-acid sequence, 246 residues long: MPTYRDQAVVLRTHKLGEADRIVSMLSREHGKIRAVARGIRRTSSKFGARLDPFNLVDLQLVQGRNLDVVAQVECLHPYSAPLRQDYSLFTAAEVMVEAADHLVPVDREPAPAQYRLLAGALRVLGQGTTDGPRPPEMVLDSYLLRSLSASGYAPDLVDCVRCGTPGPHQGFSPSLGGVVCINCQPPGTPHPHEETISYLRALLVGDWTATRDVAWSRVREGSGLVAAFVSWHMDRGLRSMPLLER.

It belongs to the RecO family.

Involved in DNA repair and RecF pathway recombination. In Cutibacterium acnes (strain DSM 16379 / KPA171202) (Propionibacterium acnes), this protein is DNA repair protein RecO.